We begin with the raw amino-acid sequence, 325 residues long: Aspartate carbamoyltransferase catalytic subunit (325 aa).

Arginine 55 and threonine 56 together coordinate carbamoyl phosphate. Position 83 (lysine 83) interacts with L-aspartate. Arginine 105, histidine 135, and glutamine 138 together coordinate carbamoyl phosphate. Residues arginine 176 and arginine 230 each contribute to the L-aspartate site. The carbamoyl phosphate site is built by glycine 271 and proline 272.

The protein belongs to the aspartate/ornithine carbamoyltransferase superfamily. ATCase family. Heterododecamer (2C3:3R2) of six catalytic PyrB chains organized as two trimers (C3), and six regulatory PyrI chains organized as three dimers (R2).

The enzyme catalyses carbamoyl phosphate + L-aspartate = N-carbamoyl-L-aspartate + phosphate + H(+). It participates in pyrimidine metabolism; UMP biosynthesis via de novo pathway; (S)-dihydroorotate from bicarbonate: step 2/3. Functionally, catalyzes the condensation of carbamoyl phosphate and aspartate to form carbamoyl aspartate and inorganic phosphate, the committed step in the de novo pyrimidine nucleotide biosynthesis pathway. The sequence is that of Aspartate carbamoyltransferase catalytic subunit from Streptomyces avermitilis (strain ATCC 31267 / DSM 46492 / JCM 5070 / NBRC 14893 / NCIMB 12804 / NRRL 8165 / MA-4680).